Here is a 400-residue protein sequence, read N- to C-terminus: Transcription initiation factor IIF subunit beta (400 aa).

Positions 1–19 (MSSGSAGAPALSNNSTNSV) are enriched in polar residues. Positions 1–47 (MSSGSAGAPALSNNSTNSVAKEKSGNISGDEYLSQEEEVFDGNDIEN) are disordered. Phosphoserine is present on residues Ser28, Ser34, and Ser56. The span at 33-47 (LSQEEEVFDGNDIEN) shows a compositional bias: acidic residues. 2 disordered regions span residues 165 to 194 (QERE…VMTD) and 366 to 400 (TLGE…EDVV). A compositionally biased stretch (basic residues) spans 174–189 (KQQQQKRRNNRKKFNH). Residues 386-400 (AEADLEDEIEMEDVV) are compositionally biased toward acidic residues.

Belongs to the TFIIF beta subunit family. TFIIF is composed of three different subunits: TFG1/RAP74, TFG2/RAP30 and TAF14.

It is found in the nucleus. Functionally, TFIIF is a general transcription initiation factor that binds to RNA polymerase II. Its functions include the recruitment of RNA polymerase II to the promoter bound DNA-TBP-TFIIB complex, decreasing the affinity of RNA polymerase II for non-specific DNA, allowing for the subsequent recruitment of TFIIE and TFIIH, and facilitating RNA polymerase II elongation. This Saccharomyces cerevisiae (strain ATCC 204508 / S288c) (Baker's yeast) protein is Transcription initiation factor IIF subunit beta (TFG2).